Reading from the N-terminus, the 103-residue chain is Large ribosomal subunit protein uL24 (103 aa).

This sequence belongs to the universal ribosomal protein uL24 family. Part of the 50S ribosomal subunit.

Functionally, one of two assembly initiator proteins, it binds directly to the 5'-end of the 23S rRNA, where it nucleates assembly of the 50S subunit. Its function is as follows. One of the proteins that surrounds the polypeptide exit tunnel on the outside of the subunit. This chain is Large ribosomal subunit protein uL24, found in Lachnospira eligens (strain ATCC 27750 / DSM 3376 / VPI C15-48 / C15-B4) (Eubacterium eligens).